Reading from the N-terminus, the 213-residue chain is Thymidylate kinase (213 aa).

7–14 (GMDGSGKT) is an ATP binding site.

Belongs to the thymidylate kinase family.

It catalyses the reaction dTMP + ATP = dTDP + ADP. Phosphorylation of dTMP to form dTDP in both de novo and salvage pathways of dTTP synthesis. The chain is Thymidylate kinase from Mycoplasma capricolum subsp. capricolum (strain California kid / ATCC 27343 / NCTC 10154).